Reading from the N-terminus, the 667-residue chain is Acetolactate synthase 1, chloroplastic (667 aa).

Residues Met-1–Phe-35 are compositionally biased toward low complexity. The tract at residues Met-1–Pro-45 is disordered. Residues Met-1–Arg-94 constitute a chloroplast transit peptide. Glu-141 contributes to the thiamine diphosphate binding site. A disulfide bridge connects residues Cys-161 and Cys-307. Residues Arg-243, His-349 to Arg-370, and Asp-392 to Asp-411 each bind FAD. Residues Gln-484 to His-564 form a thiamine pyrophosphate binding region. Mg(2+) is bound by residues Asp-535 and Asn-562.

This sequence belongs to the TPP enzyme family. The cofactor is Mg(2+). Requires thiamine diphosphate as cofactor.

It localises to the plastid. The protein resides in the chloroplast. It carries out the reaction 2 pyruvate + H(+) = (2S)-2-acetolactate + CO2. The protein operates within amino-acid biosynthesis; L-isoleucine biosynthesis; L-isoleucine from 2-oxobutanoate: step 1/4. It participates in amino-acid biosynthesis; L-valine biosynthesis; L-valine from pyruvate: step 1/4. The chain is Acetolactate synthase 1, chloroplastic (ALS SURA) from Nicotiana tabacum (Common tobacco).